We begin with the raw amino-acid sequence, 434 residues long: Histidinol dehydrogenase (434 aa).

Residues Y130, Q188, and N211 each contribute to the NAD(+) site. S237, Q259, and H262 together coordinate substrate. Zn(2+) contacts are provided by Q259 and H262. Active-site proton acceptor residues include E326 and H327. 4 residues coordinate substrate: H327, D360, E414, and H419. D360 lines the Zn(2+) pocket. H419 is a Zn(2+) binding site.

Belongs to the histidinol dehydrogenase family. As to quaternary structure, homodimer. Zn(2+) serves as cofactor.

The catalysed reaction is L-histidinol + 2 NAD(+) + H2O = L-histidine + 2 NADH + 3 H(+). It functions in the pathway amino-acid biosynthesis; L-histidine biosynthesis; L-histidine from 5-phospho-alpha-D-ribose 1-diphosphate: step 9/9. Catalyzes the sequential NAD-dependent oxidations of L-histidinol to L-histidinaldehyde and then to L-histidine. The chain is Histidinol dehydrogenase from Shigella dysenteriae serotype 1 (strain Sd197).